The following is a 250-amino-acid chain: 3-deoxy-manno-octulosonate cytidylyltransferase (250 aa).

The protein belongs to the KdsB family.

It is found in the cytoplasm. The catalysed reaction is 3-deoxy-alpha-D-manno-oct-2-ulosonate + CTP = CMP-3-deoxy-beta-D-manno-octulosonate + diphosphate. Its pathway is nucleotide-sugar biosynthesis; CMP-3-deoxy-D-manno-octulosonate biosynthesis; CMP-3-deoxy-D-manno-octulosonate from 3-deoxy-D-manno-octulosonate and CTP: step 1/1. It functions in the pathway bacterial outer membrane biogenesis; lipopolysaccharide biosynthesis. Activates KDO (a required 8-carbon sugar) for incorporation into bacterial lipopolysaccharide in Gram-negative bacteria. This chain is 3-deoxy-manno-octulosonate cytidylyltransferase, found in Francisella tularensis subsp. holarctica (strain LVS).